We begin with the raw amino-acid sequence, 35 residues long: Photosystem II reaction center protein Psb30 (35 aa).

The helical transmembrane segment at 7–27 (VFVQLALLALIVLAGPAVILL) threads the bilayer.

This sequence belongs to the Psb30/Ycf12 family. PSII is composed of 1 copy each of membrane proteins PsbA, PsbB, PsbC, PsbD, PsbE, PsbF, PsbH, PsbI, PsbJ, PsbK, PsbL, PsbM, PsbT, PsbX, PsbY, PsbZ, Psb30/Ycf12, peripheral proteins PsbO, CyanoQ (PsbQ), PsbU, PsbV and a large number of cofactors. It forms dimeric complexes.

It localises to the cellular thylakoid membrane. Its function is as follows. A core subunit of photosystem II (PSII), probably helps stabilize the reaction center. This chain is Photosystem II reaction center protein Psb30, found in Synechococcus sp. (strain JA-2-3B'a(2-13)) (Cyanobacteria bacterium Yellowstone B-Prime).